A 355-amino-acid chain; its full sequence is UDP-N-acetylglucosamine--N-acetylmuramyl-(pentapeptide) pyrophosphoryl-undecaprenol N-acetylglucosamine transferase (355 aa).

Residues 13–15, asparagine 125, arginine 162, serine 190, isoleucine 244, and glutamine 289 each bind UDP-N-acetyl-alpha-D-glucosamine; that span reads TGG.

The protein belongs to the glycosyltransferase 28 family. MurG subfamily.

It is found in the cell inner membrane. The catalysed reaction is di-trans,octa-cis-undecaprenyl diphospho-N-acetyl-alpha-D-muramoyl-L-alanyl-D-glutamyl-meso-2,6-diaminopimeloyl-D-alanyl-D-alanine + UDP-N-acetyl-alpha-D-glucosamine = di-trans,octa-cis-undecaprenyl diphospho-[N-acetyl-alpha-D-glucosaminyl-(1-&gt;4)]-N-acetyl-alpha-D-muramoyl-L-alanyl-D-glutamyl-meso-2,6-diaminopimeloyl-D-alanyl-D-alanine + UDP + H(+). Its pathway is cell wall biogenesis; peptidoglycan biosynthesis. Cell wall formation. Catalyzes the transfer of a GlcNAc subunit on undecaprenyl-pyrophosphoryl-MurNAc-pentapeptide (lipid intermediate I) to form undecaprenyl-pyrophosphoryl-MurNAc-(pentapeptide)GlcNAc (lipid intermediate II). The chain is UDP-N-acetylglucosamine--N-acetylmuramyl-(pentapeptide) pyrophosphoryl-undecaprenol N-acetylglucosamine transferase from Neisseria meningitidis serogroup C / serotype 2a (strain ATCC 700532 / DSM 15464 / FAM18).